We begin with the raw amino-acid sequence, 578 residues long: Septation ring formation regulator EzrA (578 aa).

At 1–8 (MKNNWIII) the chain is on the extracellular side. The chain crosses the membrane as a helical span at residues 9-27 (LVLVIVIIAAVLYLIGYFM). The Cytoplasmic segment spans residues 28–578 (RKKNQEQLDE…NINNPNLTAI (551 aa)). Coiled-coil stretches lie at residues 103–165 (RFMK…DDKA), 256–285 (QNFA…AAVE), and 394–490 (KILD…DDLE).

Belongs to the EzrA family.

It localises to the cell membrane. Its function is as follows. Negative regulator of FtsZ ring formation; modulates the frequency and position of FtsZ ring formation. Inhibits FtsZ ring formation at polar sites. Interacts either with FtsZ or with one of its binding partners to promote depolymerization. The sequence is that of Septation ring formation regulator EzrA from Enterococcus faecalis (strain ATCC 700802 / V583).